Consider the following 164-residue polypeptide: Cold-inducible RNA-binding protein (164 aa).

An RRM domain is found at 6 to 84; the sequence is GKLFVGGLSF…RQIRVDQAGK (79 aa). Residues 65–164 form a disordered region; sequence AGMNGKTVDG…SYRDSYDSYG (100 aa). Residues 93-118 are compositionally biased toward gly residues; sequence YRGGSSGGGRGFFRGGRGRGGGGYGG. The segment covering 155–164 has biased composition (basic and acidic residues); it reads SYRDSYDSYG.

In terms of assembly, interacts with prmt1. Interacts with elavl1/elrA (via RRM3). Associates with ribosomes. Post-translationally, methylated on arginine residues within RGG motifs. Methylation by prmt1 promotes cytoplasmic accumulation.

It is found in the nucleus. The protein resides in the nucleoplasm. The protein localises to the cytoplasm. In terms of biological role, cold-inducible mRNA binding protein. Acts cooperatively with elavl1/elrA to stabilize AU-rich element (ARE)-containing mRNAs by binding to them and inhibiting their deadenylation. Essential for embryonic gastrulation and neural development, acting to maintain the expression of a set of adhesion molecules, and cell movement during embryogenesis. Required for pronephros development. May play a role in hibernation. The polypeptide is Cold-inducible RNA-binding protein (Aquarana catesbeiana (American bullfrog)).